We begin with the raw amino-acid sequence, 455 residues long: GTPase Der (455 aa).

2 consecutive EngA-type G domains span residues 4–169 (PVVA…PPKD) and 178–353 (IQMA…EQHR). GTP is bound by residues 10–17 (GRPNVGKS), 57–61 (DTGGL), 120–123 (NKCE), 184–191 (GRPNVGKS), 231–235 (DTAGI), and 296–299 (NKWD). Residues 354–439 (RRVSTSVVNE…PLRLFWRGKQ (86 aa)) enclose the KH-like domain.

It belongs to the TRAFAC class TrmE-Era-EngA-EngB-Septin-like GTPase superfamily. EngA (Der) GTPase family. As to quaternary structure, associates with the 50S ribosomal subunit.

Its function is as follows. GTPase that plays an essential role in the late steps of ribosome biogenesis. This Synechococcus sp. (strain CC9605) protein is GTPase Der.